The sequence spans 356 residues: Histidinol-phosphate aminotransferase (356 aa).

Position 214 is an N6-(pyridoxal phosphate)lysine (Lys214).

Belongs to the class-II pyridoxal-phosphate-dependent aminotransferase family. Histidinol-phosphate aminotransferase subfamily. Homodimer. The cofactor is pyridoxal 5'-phosphate.

The catalysed reaction is L-histidinol phosphate + 2-oxoglutarate = 3-(imidazol-4-yl)-2-oxopropyl phosphate + L-glutamate. It functions in the pathway amino-acid biosynthesis; L-histidine biosynthesis; L-histidine from 5-phospho-alpha-D-ribose 1-diphosphate: step 7/9. This Escherichia coli O8 (strain IAI1) protein is Histidinol-phosphate aminotransferase.